The chain runs to 276 residues: Diaminopimelate epimerase (276 aa).

Positions 13, 46, and 66 each coordinate substrate. The active-site Proton donor is Cys75. Substrate is bound by residues 76-77 (GN), Asn159, Asn192, and 210-211 (ER). The active-site Proton acceptor is Cys219. Position 220 to 221 (220 to 221 (GT)) interacts with substrate.

This sequence belongs to the diaminopimelate epimerase family. Homodimer.

Its subcellular location is the cytoplasm. It carries out the reaction (2S,6S)-2,6-diaminopimelate = meso-2,6-diaminopimelate. It functions in the pathway amino-acid biosynthesis; L-lysine biosynthesis via DAP pathway; DL-2,6-diaminopimelate from LL-2,6-diaminopimelate: step 1/1. In terms of biological role, catalyzes the stereoinversion of LL-2,6-diaminopimelate (L,L-DAP) to meso-diaminopimelate (meso-DAP), a precursor of L-lysine and an essential component of the bacterial peptidoglycan. The chain is Diaminopimelate epimerase from Pseudomonas fluorescens (strain Pf0-1).